Reading from the N-terminus, the 280-residue chain is 2-dehydro-3-deoxyphosphooctonate aldolase (280 aa).

The protein belongs to the KdsA family.

It localises to the cytoplasm. The enzyme catalyses D-arabinose 5-phosphate + phosphoenolpyruvate + H2O = 3-deoxy-alpha-D-manno-2-octulosonate-8-phosphate + phosphate. Its pathway is carbohydrate biosynthesis; 3-deoxy-D-manno-octulosonate biosynthesis; 3-deoxy-D-manno-octulosonate from D-ribulose 5-phosphate: step 2/3. The protein operates within bacterial outer membrane biogenesis; lipopolysaccharide biosynthesis. The polypeptide is 2-dehydro-3-deoxyphosphooctonate aldolase (Thiobacillus denitrificans (strain ATCC 25259 / T1)).